Here is a 486-residue protein sequence, read N- to C-terminus: ATP synthase subunit beta (486 aa).

An ATP-binding site is contributed by 170–177; it reads GGAGVGKT.

The protein belongs to the ATPase alpha/beta chains family. In terms of assembly, F-type ATPases have 2 components, CF(1) - the catalytic core - and CF(0) - the membrane proton channel. CF(1) has five subunits: alpha(3), beta(3), gamma(1), delta(1), epsilon(1). CF(0) has three main subunits: a(1), b(2) and c(9-12). The alpha and beta chains form an alternating ring which encloses part of the gamma chain. CF(1) is attached to CF(0) by a central stalk formed by the gamma and epsilon chains, while a peripheral stalk is formed by the delta and b chains.

Its subcellular location is the cell membrane. The enzyme catalyses ATP + H2O + 4 H(+)(in) = ADP + phosphate + 5 H(+)(out). Functionally, produces ATP from ADP in the presence of a proton gradient across the membrane. The catalytic sites are hosted primarily by the beta subunits. This is ATP synthase subunit beta from Kineococcus radiotolerans (strain ATCC BAA-149 / DSM 14245 / SRS30216).